The chain runs to 403 residues: F-box/LRR-repeat protein At1g06630 (403 aa).

In terms of domain architecture, F-box spans 11-59 (RDAINWLPDEILGKILSLLATKQAVSTSVLSKKWRTLFKLVDTLEFDDS). LRR repeat units follow at residues 239 to 262 (LPNL…NLES) and 288 to 312 (IRNV…KYGL).

The protein is F-box/LRR-repeat protein At1g06630 of Arabidopsis thaliana (Mouse-ear cress).